We begin with the raw amino-acid sequence, 227 residues long: Transmembrane emp24 domain-containing protein 1 (227 aa).

A signal peptide spans 1–23; that stretch reads MMAAGAALALALWLLMPPVGVGG. The Extracellular segment spans residues 24-194; sequence AGPPPIQDGE…LQEGNLERVN (171 aa). The 83-residue stretch at 43–125 folds into the GOLD domain; the sequence is KQCFYQSAPA…EKLVFFELIF (83 aa). Positions 145–170 form a coiled coil; it reads EMLDVKMEDIKESIETMRTRLERSIQ. Residues 195–215 form a helical membrane-spanning segment; it reads FWSAVNVAVLLLVAVLQVCTL. Over 216–227 the chain is Cytoplasmic; the sequence is KRFFQDKRPVPT. Positions 218-219 match the COPII vesicle coat-binding motif; sequence FF. The COPI vesicle coat-binding signature appears at 218–227; that stretch reads FFQDKRPVPT.

It belongs to the EMP24/GP25L family. In terms of assembly, homodimer in endoplasmic reticulum, endoplasmic reticulum-Golgi intermediate compartment and cis-Golgi network. Interacts with IL1RL1. Interacts with RNF26; this interaction is important to modulate innate immune signaling through the cGAS-STING pathway.

The protein localises to the cell membrane. The protein resides in the endoplasmic reticulum membrane. Its subcellular location is the golgi apparatus. It localises to the cis-Golgi network membrane. It is found in the endoplasmic reticulum-Golgi intermediate compartment membrane. In terms of biological role, potential role in vesicular protein trafficking, mainly in the early secretory pathway. May act as a cargo receptor at the lumenal side for incorporation of secretory cargo molecules into transport vesicles and may be involved in vesicle coat formation at the cytoplasmic side. Plays a positive role in IL-33-mediated IL-8 and IL-6 production by interacting with interleukin-33 receptor IL1RL1. Plays also a role in the modulation of innate immune signaling through the cGAS-STING pathway by interacting with RNF26. This chain is Transmembrane emp24 domain-containing protein 1 (TMED1), found in Pongo abelii (Sumatran orangutan).